A 154-amino-acid chain; its full sequence is Ribosome maturation factor RimP (154 aa).

The protein belongs to the RimP family.

The protein localises to the cytoplasm. In terms of biological role, required for maturation of 30S ribosomal subunits. The chain is Ribosome maturation factor RimP from Clostridium perfringens (strain SM101 / Type A).